The sequence spans 1382 residues: DNA-directed RNA polymerase subunit beta'' (1382 aa).

Zn(2+) contacts are provided by Cys-224, Cys-294, Cys-301, and Cys-304.

The protein belongs to the RNA polymerase beta' chain family. RpoC2 subfamily. In plastids the minimal PEP RNA polymerase catalytic core is composed of four subunits: alpha, beta, beta', and beta''. When a (nuclear-encoded) sigma factor is associated with the core the holoenzyme is formed, which can initiate transcription. Zn(2+) is required as a cofactor.

Its subcellular location is the plastid. It is found in the chloroplast. The catalysed reaction is RNA(n) + a ribonucleoside 5'-triphosphate = RNA(n+1) + diphosphate. Functionally, DNA-dependent RNA polymerase catalyzes the transcription of DNA into RNA using the four ribonucleoside triphosphates as substrates. The sequence is that of DNA-directed RNA polymerase subunit beta'' from Liriodendron tulipifera (Tuliptree).